We begin with the raw amino-acid sequence, 183 residues long: MKKIKRDKIVGAGKISNYLLLIIMLGGGISFFIVGFLSYFKAFEHIALFSRFVNSDIRFIPQGITMIFYGTMAICLSIYIYFSIYYDIGAGYNEFNLISKKVVVFRKGFPGKNRLIKFVLPIPHLKSVKVMARGGINPKYEVFLYTKNLSRIPIGQVFKLSKLEYQASEIATFLGLAFEQYNL.

A run of 2 helical transmembrane segments spans residues 17 to 39 (NYLLLIIMLGGGISFFIVGFLSY) and 59 to 81 (FIPQGITMIFYGTMAICLSIYIY).

The protein belongs to the Ycf4 family.

It localises to the plastid. It is found in the chloroplast thylakoid membrane. Seems to be required for the assembly of the photosystem I complex. This chain is Photosystem I assembly protein Ycf4, found in Cyanidium caldarium (Red alga).